A 509-amino-acid polypeptide reads, in one-letter code: Zinc finger CCCH-type with G patch domain-containing protein (509 aa).

The C3H1-type zinc finger occupies 155 to 178 (PCNYYLEGECRFDEIRCRYSHGAL). Positions 253-277 (EEDGLTSEDSSSSPHDESSDEIDSD) are disordered. The G-patch domain occupies 310–356 (TRGIGSKLMEKMGYIHGTGLGSEGRGIVTPVSAQILPQGRSLDACME). The segment at 409-430 (GGESRHQGDQAAKKAKTNDLQQ) is disordered. Positions 411-420 (ESRHQGDQAA) are enriched in basic and acidic residues.

It is found in the nucleus. In terms of biological role, transcription repressor. The chain is Zinc finger CCCH-type with G patch domain-containing protein from Drosophila persimilis (Fruit fly).